A 301-amino-acid chain; its full sequence is Glycine cleavage system transcriptional activator homolog (301 aa).

One can recognise an HTH lysR-type domain in the interval 10 to 67 (PPLNSLKSFESAARYLSFTKAADELCVTQAAVSHQIKLLEXFLGIDLFKRKNRSLELT). Residues 27-46 (FTKAADELCVTQAAVSHQIK) constitute a DNA-binding region (H-T-H motif).

Belongs to the LysR transcriptional regulatory family.

Its subcellular location is the cytoplasm. Not known, the gcv operon regulated by the E.coli homolog does not exist in H.influenzae, so it probably acts as a transcriptional regulator on some other operon. The chain is Glycine cleavage system transcriptional activator homolog (gcvA) from Haemophilus influenzae (strain ATCC 51907 / DSM 11121 / KW20 / Rd).